The following is a 297-amino-acid chain: 33 kDa chaperonin (297 aa).

Intrachain disulfides connect Cys232–Cys234 and Cys266–Cys269.

The protein belongs to the HSP33 family. Post-translationally, under oxidizing conditions two disulfide bonds are formed involving the reactive cysteines. Under reducing conditions zinc is bound to the reactive cysteines and the protein is inactive.

Its subcellular location is the cytoplasm. Redox regulated molecular chaperone. Protects both thermally unfolding and oxidatively damaged proteins from irreversible aggregation. Plays an important role in the bacterial defense system toward oxidative stress. This is 33 kDa chaperonin from Pseudomonas aeruginosa (strain LESB58).